A 355-amino-acid polypeptide reads, in one-letter code: 4-hydroxy-3-methylbut-2-en-1-yl diphosphate synthase (flavodoxin) (355 aa).

[4Fe-4S] cluster contacts are provided by Cys266, Cys269, Cys301, and Glu308.

Belongs to the IspG family. It depends on [4Fe-4S] cluster as a cofactor.

It catalyses the reaction (2E)-4-hydroxy-3-methylbut-2-enyl diphosphate + oxidized [flavodoxin] + H2O + 2 H(+) = 2-C-methyl-D-erythritol 2,4-cyclic diphosphate + reduced [flavodoxin]. The protein operates within isoprenoid biosynthesis; isopentenyl diphosphate biosynthesis via DXP pathway; isopentenyl diphosphate from 1-deoxy-D-xylulose 5-phosphate: step 5/6. Converts 2C-methyl-D-erythritol 2,4-cyclodiphosphate (ME-2,4cPP) into 1-hydroxy-2-methyl-2-(E)-butenyl 4-diphosphate. This is 4-hydroxy-3-methylbut-2-en-1-yl diphosphate synthase (flavodoxin) from Caldanaerobacter subterraneus subsp. tengcongensis (strain DSM 15242 / JCM 11007 / NBRC 100824 / MB4) (Thermoanaerobacter tengcongensis).